The sequence spans 247 residues: 23S rRNA (guanosine-2'-O-)-methyltransferase RlmB (247 aa).

Gly-197, Ile-217, and Leu-226 together coordinate S-adenosyl-L-methionine.

It belongs to the class IV-like SAM-binding methyltransferase superfamily. RNA methyltransferase TrmH family. RlmB subfamily.

It localises to the cytoplasm. The enzyme catalyses guanosine(2251) in 23S rRNA + S-adenosyl-L-methionine = 2'-O-methylguanosine(2251) in 23S rRNA + S-adenosyl-L-homocysteine + H(+). Its function is as follows. Specifically methylates the ribose of guanosine 2251 in 23S rRNA. This Vibrio cholerae serotype O1 (strain ATCC 39315 / El Tor Inaba N16961) protein is 23S rRNA (guanosine-2'-O-)-methyltransferase RlmB.